The following is a 433-amino-acid chain: GTPase Der (433 aa).

EngA-type G domains follow at residues 5 to 167 and 174 to 349; these read KKVL…GEVG and IKVG…DQLE. GTP contacts are provided by residues 11-18, 58-62, 119-122, 180-187, 227-231, and 292-295; these read GRPNVGKS, DTGGF, NKVD, GKPNSGKS, DTAGI, and SKWD. The 81-residue stretch at 349–429 folds into the KH-like domain; sequence ELKTSTPDLN…PILVELKEKI (81 aa).

The protein belongs to the TRAFAC class TrmE-Era-EngA-EngB-Septin-like GTPase superfamily. EngA (Der) GTPase family. As to quaternary structure, associates with the 50S ribosomal subunit.

GTPase that plays an essential role in the late steps of ribosome biogenesis. This is GTPase Der from Borreliella burgdorferi (strain ATCC 35210 / DSM 4680 / CIP 102532 / B31) (Borrelia burgdorferi).